Consider the following 271-residue polypeptide: Ribosomal RNA small subunit methyltransferase A (271 aa).

S-adenosyl-L-methionine is bound by residues Asn-19, Leu-21, Gly-46, Glu-67, Asp-92, and Asn-113.

This sequence belongs to the class I-like SAM-binding methyltransferase superfamily. rRNA adenine N(6)-methyltransferase family. RsmA subfamily.

The protein localises to the cytoplasm. It catalyses the reaction adenosine(1518)/adenosine(1519) in 16S rRNA + 4 S-adenosyl-L-methionine = N(6)-dimethyladenosine(1518)/N(6)-dimethyladenosine(1519) in 16S rRNA + 4 S-adenosyl-L-homocysteine + 4 H(+). Its function is as follows. Specifically dimethylates two adjacent adenosines (A1518 and A1519) in the loop of a conserved hairpin near the 3'-end of 16S rRNA in the 30S particle. May play a critical role in biogenesis of 30S subunits. This Photobacterium profundum (strain SS9) protein is Ribosomal RNA small subunit methyltransferase A.